The chain runs to 98 residues: uncharacterized protein (98 aa).

It belongs to the HesB/IscA family.

This is an uncharacterized protein from Staphylococcus saprophyticus subsp. saprophyticus (strain ATCC 15305 / DSM 20229 / NCIMB 8711 / NCTC 7292 / S-41).